The sequence spans 114 residues: Large ribosomal subunit protein bL20 (114 aa).

The protein belongs to the bacterial ribosomal protein bL20 family.

Its function is as follows. Binds directly to 23S ribosomal RNA and is necessary for the in vitro assembly process of the 50S ribosomal subunit. It is not involved in the protein synthesizing functions of that subunit. This Anaeromyxobacter dehalogenans (strain 2CP-C) protein is Large ribosomal subunit protein bL20.